An 84-amino-acid chain; its full sequence is Carboxysome shell vertex protein CsoS4B (84 aa).

In terms of domain architecture, BMV spans 1–77 (MQILQVKKQL…TDLTVGGIID (77 aa)).

This sequence belongs to the CcmL/EutN family. CsoS4 subfamily. In terms of assembly, homopentamer.

It is found in the carboxysome. Its function is as follows. Probably forms vertices in the carboxysome, a polyhedral inclusion where RuBisCO (ribulose bisphosphate carboxylase, cbbL-cbbS) is sequestered. Has been modeled to induce curvature upon insertion into an otherwise flat hexagonal layer of major carboxysome subunits. The polypeptide is Carboxysome shell vertex protein CsoS4B (Hydrogenovibrio crunogenus (strain DSM 25203 / XCL-2) (Thiomicrospira crunogena)).